A 195-amino-acid chain; its full sequence is Adenylate kinase (195 aa).

ATP is bound at residue 10–15 (GSGKGT). The tract at residues 30–59 (STGDILRAERAAGTLLGQQAQSYMDRGELV) is NMP. AMP-binding positions include threonine 31, arginine 36, 57–59 (ELV), 85–88 (GFPR), and glutamine 92. Residues 126 to 140 (NRAKQAVNGQQRSDD) are LID. ATP is bound at residue arginine 127. The AMP site is built by arginine 137 and arginine 148. Residue arginine 176 coordinates ATP.

This sequence belongs to the adenylate kinase family. Monomer.

The protein resides in the cytoplasm. The enzyme catalyses AMP + ATP = 2 ADP. It participates in purine metabolism; AMP biosynthesis via salvage pathway; AMP from ADP: step 1/1. Its function is as follows. Catalyzes the reversible transfer of the terminal phosphate group between ATP and AMP. Plays an important role in cellular energy homeostasis and in adenine nucleotide metabolism. In Thermosynechococcus vestitus (strain NIES-2133 / IAM M-273 / BP-1), this protein is Adenylate kinase.